The following is a 104-amino-acid chain: uncharacterized protein (104 aa).

The helical transmembrane segment at 72 to 92 (LIFSHNIVIIVSPIYMISFII) threads the bilayer.

The protein localises to the membrane. This is an uncharacterized protein from Saccharomyces cerevisiae (strain ATCC 204508 / S288c) (Baker's yeast).